The following is a 383-amino-acid chain: Galactokinase (383 aa).

34–37 (EHTD) contacts substrate. Residue 124 to 130 (GAGLSSS) participates in ATP binding. Serine 130 and glutamate 162 together coordinate Mg(2+). Aspartate 174 (proton acceptor) is an active-site residue. Tyrosine 223 serves as a coordination point for substrate.

It belongs to the GHMP kinase family. GalK subfamily.

Its subcellular location is the cytoplasm. The enzyme catalyses alpha-D-galactose + ATP = alpha-D-galactose 1-phosphate + ADP + H(+). It functions in the pathway carbohydrate metabolism; galactose metabolism. In terms of biological role, catalyzes the transfer of the gamma-phosphate of ATP to D-galactose to form alpha-D-galactose-1-phosphate (Gal-1-P). This is Galactokinase from Serratia proteamaculans (strain 568).